The chain runs to 600 residues: Glutamine--fructose-6-phosphate aminotransferase [isomerizing] (600 aa).

Cys2 acts as the Nucleophile; for GATase activity in catalysis. In terms of domain architecture, Glutamine amidotransferase type-2 spans 2–217 (CGIVGYIGQL…DKEMVIVTDD (216 aa)). SIS domains are found at residues 283–422 (IAAA…KNGI) and 452–590 (IARE…VDKP). Lys595 functions as the For Fru-6P isomerization activity in the catalytic mechanism.

Homodimer.

Its subcellular location is the cytoplasm. It catalyses the reaction D-fructose 6-phosphate + L-glutamine = D-glucosamine 6-phosphate + L-glutamate. Catalyzes the first step in hexosamine metabolism, converting fructose-6P into glucosamine-6P using glutamine as a nitrogen source. The chain is Glutamine--fructose-6-phosphate aminotransferase [isomerizing] from Bacillus subtilis (strain 168).